The following is a 308-amino-acid chain: Aliphatic nitrilase (308 aa).

In terms of domain architecture, CN hydrolase spans 4 to 270 (FRAAVVQAAP…ETILTADLDT (267 aa)). Catalysis depends on E44, which acts as the Proton acceptor. K130 is a catalytic residue. The Nucleophile role is filled by C164.

This sequence belongs to the carbon-nitrogen hydrolase superfamily. Nitrilase family.

It catalyses the reaction a nitrile + 2 H2O = a carboxylate + NH4(+). In terms of biological role, nitrilase that hydrolyzes preferentially phenylacetonitrile, but not (R,S)-mandelonitrile. Also acts on dinitriles like phenylenediacetonitriles (PDAs) 1,2-PDA, 1,3-PDA, and 1,4-PDA, and cyanophenyl acetonitriles (CPAs) 2-CPA and 4-CPA, but with lower activities. This chain is Aliphatic nitrilase (nit), found in Sinorhizobium fredii (strain HH103).